Reading from the N-terminus, the 383-residue chain is Protein delta homolog 1 (383 aa).

Positions 1-23 (MTATEALLRVLLLLLAFGHSTYG) are cleaved as a signal peptide. EGF-like domains follow at residues 24–55 (AECF…PLCD), 53–86 (LCDQ…ELCD), 88–125 (DVRA…KDCQ), 127–168 (KDGP…NFCE), 170–206 (VANS…KTCS), and 208–245 (PVTN…LTCV). Residues 24-303 (AECFPACNPQ…KKTPLLTEGQ (280 aa)) lie on the Extracellular side of the membrane. 12 cysteine pairs are disulfide-bonded: C26–C37, C30–C43, C45–C54, C57–C68, C63–C74, C76–C85, C92–C103, C97–C113, C115–C124, C131–C144, C138–C156, and C158–C167. O-linked (GalNAc...) serine glycosylation is present at S94. N100 carries N-linked (GlcNAc...) asparagine glycosylation. T143 is a glycosylation site (O-linked (GalNAc...) threonine). An O-linked (GalNAc...) serine; partial glycan is attached at S163. N-linked (GlcNAc...) asparagine; atypical; partial glycosylation is found at N165 and N172. Disulfide bonds link C174–C185, C179–C194, C196–C205, C212–C223, C217–C233, and C235–C244. A glycan (O-linked (GalNAc...) serine) is linked at S214. Residue T222 is glycosylated (O-linked (GalNAc...) threonine; partial). An O-linked (GalNAc...) serine; partial glycan is attached at S251. An O-linked (GalNAc...) threonine glycan is attached at T256. A glycan (O-linked (GalNAc...) serine; partial) is linked at S260. Residues 304 to 327 (AICFTILGVLTSLVVLGTVGIVFL) form a helical membrane-spanning segment. At 328–383 (NKCETWVSNLRYNHMLRKKKNLLLQYNSGEDLAVNIIFPEKIDMTTFSKEAGDEEI) the chain is on the cytoplasmic side.

As to quaternary structure, monomer. Interacts with SH3RF2. Post-translationally, N- and O-glycosylated. O-glycosylated with core 1 or possibly core 8 glycans. As to expression, found within the stromal cells in close contact to the vascular structure of placental villi, yolk sac, fetal liver, adrenal cortex and pancreas and in the beta cells of the islets of Langerhans in the adult pancreas. Found also in some forms of neuroendocrine lung tumor tissue.

It is found in the membrane. It localises to the cytoplasm. In terms of biological role, may have a role in neuroendocrine differentiation. This is Protein delta homolog 1 (DLK1) from Homo sapiens (Human).